We begin with the raw amino-acid sequence, 590 residues long: Interferon alpha/beta receptor 1 (590 aa).

The first 26 residues, 1-26 (MLAVVGAAALVLVAGAPWVLPSAAGG), serve as a signal peptide directing secretion. Residues 27-429 (ENLKPPENID…EKTRPGSFST (403 aa)) are Extracellular-facing. Fibronectin type-III domains lie at 31 to 125 (PPEN…PFYT), 127 to 226 (HMSP…TTVA), 230 to 327 (PVPG…FIDS), and 332 to 425 (LPPP…TRPG). Residue Asn43 is glycosylated (N-linked (GlcNAc...) asparagine). Cys78 and Cys86 are oxidised to a cystine. N-linked (GlcNAc...) asparagine glycosylation is found at Asn109, Asn181, and Asn214. 2 disulfide bridges follow: Cys199–Cys220 and Cys284–Cys292. 4 N-linked (GlcNAc...) asparagine glycosylation sites follow: Asn314, Asn370, Asn409, and Asn413. Cys397 and Cys419 are joined by a disulfide. Residues 430–449 (IWIITGLGVVFFSVMVLYAL) form a helical membrane-spanning segment. Over 450–590 (RSVWKYLCHV…ALRTEPALLC (141 aa)) the chain is Cytoplasmic. The segment at 483 to 492 (VLLTAEEHTE) is important for interaction with TYK2. The interval 514–545 (DLRKYSSQTSQDSGNYSNEEEESVGTESGQAV) is disordered. Lys517 participates in a covalent cross-link: Glycyl lysine isopeptide (Lys-Gly) (interchain with G-Cter in ubiquitin). Residues 518–530 (YSSQTSQDSGNYS) are compositionally biased toward polar residues. The residue at position 526 (Ser526) is a Phosphoserine.

The protein belongs to the type II cytokine receptor family. Heterodimer with IFNAR2; forming the receptor for type I interferon. Interacts with TYK2. Interacts with STAT1 and STAT2. Interacts (serine-phosphorylated form) with FBXW11, the substrate recognition component of a SCF (SKP1-CUL1-F-box protein) E3 ubiquitin-protein ligase complex. 3Interacts with SHMT2; this promotes interaction with ABRAXAS2 and the BRISC complex. Interacts with TRIM10; this interaction prevents association between IFNAR1 and TYK2. In terms of processing, ubiquitinated. This leads to its internalization and lysosomal degradation. The 'Lys-63'-linked ubiquitin chains are cleaved off by the BRISC complex; this prevents receptor internalization and degradation. Probable ubiquitination sites have been identified in human, but are poorly conserved across species. Phosphorylated on serine residues in response to interferon binding; this promotes interaction with FBXW11 and ubiquitination.

It is found in the cell membrane. The protein resides in the late endosome. The protein localises to the lysosome. Its function is as follows. Together with IFNAR2, forms the heterodimeric receptor for type I interferons (including interferons alpha, beta, epsilon, omega and kappa). Type I interferon binding activates the JAK-STAT signaling cascade, and triggers tyrosine phosphorylation of a number of proteins including JAKs, TYK2, STAT proteins and the IFNR alpha- and beta-subunits themselves. STAT proteins are then phosphorylated by the JAKs, promoting their translocation into the nucleus to regulate expression of interferon-regulated genes. Can also act independently of IFNAR2: form an active IFNB1 receptor by itself and activate a signaling cascade that does not involve activation of the JAK-STAT pathway. The protein is Interferon alpha/beta receptor 1 (Ifnar1) of Mus musculus (Mouse).